Consider the following 315-residue polypeptide: Cysteine synthase (315 aa).

Residues N8 and R35 each contribute to the hydrogen sulfide site. K42 carries the N6-(pyridoxal phosphate)lysine modification. Pyridoxal 5'-phosphate-binding positions include N72 and 177–181 (GTGGT). L269 contributes to the hydrogen sulfide binding site. S273 is a pyridoxal 5'-phosphate binding site.

The protein belongs to the cysteine synthase/cystathionine beta-synthase family. In terms of assembly, homodimer. The cofactor is pyridoxal 5'-phosphate.

The catalysed reaction is O-acetyl-L-serine + hydrogen sulfide = L-cysteine + acetate. The protein operates within amino-acid biosynthesis; L-cysteine biosynthesis; L-cysteine from L-serine: step 2/2. In Buchnera aphidicola subsp. Acyrthosiphon pisum (strain APS) (Acyrthosiphon pisum symbiotic bacterium), this protein is Cysteine synthase (cysK).